The sequence spans 251 residues: 5'-nucleotidase SurE (251 aa).

A divalent metal cation is bound by residues aspartate 8, aspartate 9, serine 42, and asparagine 94.

It belongs to the SurE nucleotidase family. Requires a divalent metal cation as cofactor.

It is found in the cytoplasm. It carries out the reaction a ribonucleoside 5'-phosphate + H2O = a ribonucleoside + phosphate. Functionally, nucleotidase that shows phosphatase activity on nucleoside 5'-monophosphates. This chain is 5'-nucleotidase SurE, found in Hydrogenovibrio crunogenus (strain DSM 25203 / XCL-2) (Thiomicrospira crunogena).